We begin with the raw amino-acid sequence, 161 residues long: Endoribonuclease YbeY (161 aa).

Zn(2+) contacts are provided by His127, His131, and His137.

This sequence belongs to the endoribonuclease YbeY family. The cofactor is Zn(2+).

It is found in the cytoplasm. Single strand-specific metallo-endoribonuclease involved in late-stage 70S ribosome quality control and in maturation of the 3' terminus of the 16S rRNA. In Listeria welshimeri serovar 6b (strain ATCC 35897 / DSM 20650 / CCUG 15529 / CIP 8149 / NCTC 11857 / SLCC 5334 / V8), this protein is Endoribonuclease YbeY.